A 475-amino-acid polypeptide reads, in one-letter code: Ankyrin repeat, SAM and basic leucine zipper domain-containing protein 1 (475 aa).

Over residues 1-10 the composition is skewed to low complexity; sequence MAAGRLRGLA. A disordered region spans residues 1 to 24; sequence MAAGRLRGLAVAGGGESSESDDDG. Phosphoserine is present on residues Ser17, Ser18, and Ser20. ANK repeat units lie at residues 45–74, 78–107, 110–144, 148–177, 181–210, and 214–243; these read EKNE…SVDS, YGWT…NANF, DKQT…DPNV, RLMT…EVNT, SGYT…DKML, and DGNI…PLKG. One can recognise an SAM domain in the interval 272-334; that stretch reads SYTAFGDLEV…KILAALKELD (63 aa).

As to quaternary structure, interacts with DDX4, PIWIL1, RANBP9 and TDRD1.

It is found in the cytoplasm. Its function is as follows. Plays a central role during spermatogenesis by repressing transposable elements and preventing their mobilization, which is essential for the germline integrity. Acts via the piRNA metabolic process, which mediates the repression of transposable elements during meiosis by forming complexes composed of piRNAs and Piwi proteins and governs the methylation and subsequent repression of transposons. Its association with pi-bodies suggests a participation in the primary piRNAs metabolic process. Required prior to the pachytene stage to facilitate the production of multiple types of piRNAs, including those associated with repeats involved in the regulation of retrotransposons. May act by mediating protein-protein interactions during germ cell maturation. The sequence is that of Ankyrin repeat, SAM and basic leucine zipper domain-containing protein 1 (ASZ1) from Carollia perspicillata (Seba's short-tailed bat).